The primary structure comprises 362 residues: Dihydroorotate dehydrogenase (quinone) (362 aa).

FMN is bound by residues 62–66 and threonine 86; that span reads AGYDK. Lysine 66 provides a ligand contact to substrate. 111 to 115 is a substrate binding site; sequence NRLGF. 2 residues coordinate FMN: asparagine 139 and asparagine 170. Asparagine 170 contributes to the substrate binding site. The Nucleophile role is filled by serine 173. Asparagine 175 is a binding site for substrate. Residues lysine 215 and serine 243 each contribute to the FMN site. 244–245 contacts substrate; sequence NT. FMN-binding positions include glycine 266, glycine 295, and 316–317; that span reads YS.

It belongs to the dihydroorotate dehydrogenase family. Type 2 subfamily. As to quaternary structure, monomer. Requires FMN as cofactor.

The protein localises to the cell membrane. It carries out the reaction (S)-dihydroorotate + a quinone = orotate + a quinol. It participates in pyrimidine metabolism; UMP biosynthesis via de novo pathway; orotate from (S)-dihydroorotate (quinone route): step 1/1. Functionally, catalyzes the conversion of dihydroorotate to orotate with quinone as electron acceptor. The polypeptide is Dihydroorotate dehydrogenase (quinone) (Rhizobium rhizogenes (strain K84 / ATCC BAA-868) (Agrobacterium radiobacter)).